The primary structure comprises 286 residues: Pantothenate synthetase (286 aa).

30-37 (MGNLHDGH) provides a ligand contact to ATP. His-37 serves as the catalytic Proton donor. Gln-61 contributes to the (R)-pantoate binding site. Gln-61 contacts beta-alanine. 148–151 (GKKD) is a binding site for ATP. Gln-154 provides a ligand contact to (R)-pantoate. Residues Val-177 and 185 to 188 (LSSR) contribute to the ATP site.

It belongs to the pantothenate synthetase family. As to quaternary structure, homodimer.

It is found in the cytoplasm. The catalysed reaction is (R)-pantoate + beta-alanine + ATP = (R)-pantothenate + AMP + diphosphate + H(+). It participates in cofactor biosynthesis; (R)-pantothenate biosynthesis; (R)-pantothenate from (R)-pantoate and beta-alanine: step 1/1. Its function is as follows. Catalyzes the condensation of pantoate with beta-alanine in an ATP-dependent reaction via a pantoyl-adenylate intermediate. The sequence is that of Pantothenate synthetase from Psychrobacter sp. (strain PRwf-1).